The primary structure comprises 370 residues: Putative L-lysine 2,3-aminomutase aq_454 (370 aa).

Positions 107 to 322 constitute a Radical SAM core domain; that stretch reads HRYPDRVLLN…RGRLSGFGIP (216 aa). Residues Cys-121, Cys-125, and Cys-128 each coordinate [4Fe-4S] cluster. Lys-334 bears the N6-(pyridoxal phosphate)lysine mark.

Belongs to the radical SAM superfamily. KamA family. [4Fe-4S] cluster serves as cofactor. Pyridoxal 5'-phosphate is required as a cofactor.

The chain is Putative L-lysine 2,3-aminomutase aq_454 from Aquifex aeolicus (strain VF5).